Here is a 275-residue protein sequence, read N- to C-terminus: Formamidopyrimidine-DNA glycosylase (275 aa).

Residue proline 2 is the Schiff-base intermediate with DNA of the active site. Residue glutamate 3 is the Proton donor of the active site. The Proton donor; for beta-elimination activity role is filled by lysine 58. Histidine 93, arginine 111, and arginine 156 together coordinate DNA. An FPG-type zinc finger spans residues 241-275 (FAYDRAGLPCRVCGTPIRQIVQGQRSTYFCPTCQR). The Proton donor; for delta-elimination activity role is filled by arginine 265.

This sequence belongs to the FPG family. Monomer. Zn(2+) is required as a cofactor.

It carries out the reaction Hydrolysis of DNA containing ring-opened 7-methylguanine residues, releasing 2,6-diamino-4-hydroxy-5-(N-methyl)formamidopyrimidine.. The enzyme catalyses 2'-deoxyribonucleotide-(2'-deoxyribose 5'-phosphate)-2'-deoxyribonucleotide-DNA = a 3'-end 2'-deoxyribonucleotide-(2,3-dehydro-2,3-deoxyribose 5'-phosphate)-DNA + a 5'-end 5'-phospho-2'-deoxyribonucleoside-DNA + H(+). Its function is as follows. Involved in base excision repair of DNA damaged by oxidation or by mutagenic agents. Acts as a DNA glycosylase that recognizes and removes damaged bases. Has a preference for oxidized purines, such as 7,8-dihydro-8-oxoguanine (8-oxoG). Has AP (apurinic/apyrimidinic) lyase activity and introduces nicks in the DNA strand. Cleaves the DNA backbone by beta-delta elimination to generate a single-strand break at the site of the removed base with both 3'- and 5'-phosphates. This Burkholderia vietnamiensis (strain G4 / LMG 22486) (Burkholderia cepacia (strain R1808)) protein is Formamidopyrimidine-DNA glycosylase.